The following is a 617-amino-acid chain: KIF-binding protein (617 aa).

Residues 48-83 are disordered; the sequence is ALLGPAPEDEDEPAADDGPGDQALGAGEPREAEGPG. Residues 54–66 are compositionally biased toward acidic residues; it reads PEDEDEPAADDGP. Position 174 is a phosphoserine (serine 174).

The protein belongs to the KIF-binding protein family. In terms of assembly, interacts with KIF1B; positively regulates KIF1B microtubule motor activity. Interacts with STMN2. In terms of tissue distribution, in the embryo it is expressed in cortical neurons; expression increases during neuronal development.

Its subcellular location is the cytoplasm. The protein resides in the cytoskeleton. Activator of KIF1B plus-end-directed microtubule motor activity. Required for organization of axonal microtubules, and axonal outgrowth and maintenance during peripheral and central nervous system development. The polypeptide is KIF-binding protein (Mus musculus (Mouse)).